The chain runs to 310 residues: ADP-L-glycero-D-manno-heptose-6-epimerase (310 aa).

NADP(+)-binding positions include 10–11 (FI), 31–32 (DN), Lys-38, Lys-53, 75–79 (EGACS), and Asn-92. The active-site Proton acceptor is Tyr-140. Position 144 (Lys-144) interacts with NADP(+). Asn-169 contacts substrate. Val-170 and Lys-178 together coordinate NADP(+). The Proton acceptor role is filled by Lys-178. Substrate-binding positions include Gly-180, His-187, 201 to 204 (FAGS), Arg-209, and Tyr-272.

The protein belongs to the NAD(P)-dependent epimerase/dehydratase family. HldD subfamily. Homopentamer. NADP(+) serves as cofactor.

The enzyme catalyses ADP-D-glycero-beta-D-manno-heptose = ADP-L-glycero-beta-D-manno-heptose. It participates in nucleotide-sugar biosynthesis; ADP-L-glycero-beta-D-manno-heptose biosynthesis; ADP-L-glycero-beta-D-manno-heptose from D-glycero-beta-D-manno-heptose 7-phosphate: step 4/4. Its function is as follows. Catalyzes the interconversion between ADP-D-glycero-beta-D-manno-heptose and ADP-L-glycero-beta-D-manno-heptose via an epimerization at carbon 6 of the heptose. This Sodalis glossinidius (strain morsitans) protein is ADP-L-glycero-D-manno-heptose-6-epimerase.